We begin with the raw amino-acid sequence, 168 residues long: Large ribosomal subunit protein bL9 (168 aa).

The segment at 149 to 168 (QSFEEEPAPEAPAEEAEAAE) is disordered. The segment covering 152-168 (EEEPAPEAPAEEAEAAE) has biased composition (acidic residues).

Belongs to the bacterial ribosomal protein bL9 family.

Functionally, binds to the 23S rRNA. The protein is Large ribosomal subunit protein bL9 of Desulfovibrio desulfuricans (strain ATCC 27774 / DSM 6949 / MB).